The chain runs to 141 residues: Large ribosomal subunit protein uL11 (141 aa).

The protein belongs to the universal ribosomal protein uL11 family. As to quaternary structure, part of the ribosomal stalk of the 50S ribosomal subunit. Interacts with L10 and the large rRNA to form the base of the stalk. L10 forms an elongated spine to which L12 dimers bind in a sequential fashion forming a multimeric L10(L12)X complex. One or more lysine residues are methylated.

In terms of biological role, forms part of the ribosomal stalk which helps the ribosome interact with GTP-bound translation factors. This is Large ribosomal subunit protein uL11 from Clostridium botulinum (strain Alaska E43 / Type E3).